The chain runs to 248 residues: Anamorsin homolog (248 aa).

The segment at 4-129 (FKGLQKSLYI…ETGSSARLSF (126 aa)) is N-terminal SAM-like domain. The interval 130 to 161 (AKKNANAANVWKISGDDEELIDEEELLDEEDK) is linker. Residues Cys-172, Cys-181, Cys-184, and Cys-186 each coordinate [2Fe-2S] cluster. The tract at residues 172-186 (CSTTGKRKACKNCSC) is fe-S binding site A. [4Fe-4S] cluster is bound by residues Cys-209, Cys-212, Cys-220, and Cys-223. 2 consecutive short sequence motifs (cx2C motif) follow at residues 209 to 212 (CGNC) and 220 to 223 (CSTC). A fe-S binding site B region spans residues 209–223 (CGNCYLGDAFRCSTC).

This sequence belongs to the anamorsin family. As to quaternary structure, monomer. [2Fe-2S] cluster serves as cofactor. Requires [4Fe-4S] cluster as cofactor.

The protein resides in the cytoplasm. It is found in the mitochondrion intermembrane space. Functionally, component of the cytosolic iron-sulfur (Fe-S) protein assembly (CIA) machinery. Required for the maturation of extramitochondrial Fe-S proteins. Part of an electron transfer chain functioning in an early step of cytosolic Fe-S biogenesis, facilitating the de novo assembly of a [4Fe-4S] cluster on the cytosolic Fe-S scaffold complex. Electrons are transferred from NADPH via a FAD- and FMN-containing diflavin oxidoreductase. Together with the diflavin oxidoreductase, also required for the assembly of the diferric tyrosyl radical cofactor of ribonucleotide reductase (RNR), probably by providing electrons for reduction during radical cofactor maturation in the catalytic small subunit. The sequence is that of Anamorsin homolog from Drosophila sechellia (Fruit fly).